Reading from the N-terminus, the 100-residue chain is Urease subunit gamma (100 aa).

This sequence belongs to the urease gamma subunit family. As to quaternary structure, heterotrimer of UreA (gamma), UreB (beta) and UreC (alpha) subunits. Three heterotrimers associate to form the active enzyme.

The protein resides in the cytoplasm. It carries out the reaction urea + 2 H2O + H(+) = hydrogencarbonate + 2 NH4(+). The protein operates within nitrogen metabolism; urea degradation; CO(2) and NH(3) from urea (urease route): step 1/1. The protein is Urease subunit gamma of Laribacter hongkongensis (strain HLHK9).